A 342-amino-acid polypeptide reads, in one-letter code: [Citrate [pro-3S]-lyase] ligase (342 aa).

Positions 1–127 (MTLILKRVQL…RAVLMENSRE (127 aa)) constitute an N-acetyltransferase domain.

The enzyme catalyses holo-[citrate lyase ACP] + acetate + ATP = acetyl-[citrate lyase ACP] + AMP + diphosphate. Functionally, acetylation of prosthetic group (2-(5''-phosphoribosyl)-3'-dephosphocoenzyme-A) of the gamma subunit of citrate lyase. This is [Citrate [pro-3S]-lyase] ligase (citC) from Klebsiella pneumoniae.